The chain runs to 202 residues: UDP-N-acetylglucosamine transferase subunit ALG13 (202 aa).

This sequence belongs to the glycosyltransferase 28 family. In terms of assembly, heterodimer with ALG14 to form a functional enzyme.

It is found in the endoplasmic reticulum. The catalysed reaction is an N-acetyl-alpha-D-glucosaminyl-diphospho-di-trans,poly-cis-dolichol + UDP-N-acetyl-alpha-D-glucosamine = an N,N'-diacetylchitobiosyl-diphospho-di-trans,poly-cis-dolichol + UDP + H(+). Involved in protein N-glycosylation. Essential for the second step of the dolichol-linked oligosaccharide pathway. The sequence is that of UDP-N-acetylglucosamine transferase subunit ALG13 (ALG13) from Saccharomyces cerevisiae (strain ATCC 204508 / S288c) (Baker's yeast).